Reading from the N-terminus, the 238-residue chain is Probable transcriptional regulatory protein YeeN (238 aa).

The protein belongs to the TACO1 family. YeeN subfamily.

It is found in the cytoplasm. The polypeptide is Probable transcriptional regulatory protein YeeN (Shigella flexneri).